We begin with the raw amino-acid sequence, 92 residues long: MNFFAMQKSSLLPDTPYTVQSLQIVDYFIRIVYTVRYAPNILLHYQLFCITKKFIFAWQVPPPLLSYQSCSTDKQYKYSCRSTRKHSSSLTA.

Functionally, acts as a transactivator of AC102 and HE65 genes. Therefore, participates in the global recruitment of G-actin to the host nucleus. In Autographa californica nuclear polyhedrosis virus (AcMNPV), this protein is Protein AC152 (AC152).